The chain runs to 50 residues: F420-non-reducing hydrogenase vhu subunit U (50 aa).

Ni(2+) contacts are provided by selenocysteine 27 and cysteine 30. A non-standard amino acid (selenocysteine) is located at residue selenocysteine 27. A propeptide spans 34–50 (IIVKDEKGNKIIEVIKE) (removed in mature form).

Belongs to the [NiFe]/[NiFeSe] hydrogenase large subunit family. In terms of assembly, the F420-non-reducing hydrogenase vhu is composed of four subunits; VhuA, VhuD, VhuG and VhuU. Ni(2+) serves as cofactor.

The chain is F420-non-reducing hydrogenase vhu subunit U (vhuU) from Methanocaldococcus jannaschii (strain ATCC 43067 / DSM 2661 / JAL-1 / JCM 10045 / NBRC 100440) (Methanococcus jannaschii).